Reading from the N-terminus, the 477-residue chain is MATARAKARGSEAGARCHRAPGPPPRPKARRTARRRRAETLTARRSRPSAGERRAGSQRAWSGAPRAAVFGDECARGALFKAWCVPCLVSLDTLQELCRKEKLTCKSIGITKRNLNNYEVEYLCDYKVAKGVEYYLVKWKGWPDSTNTWEPLRNLRCPQLLRQFSDDKKTYLAQERKCKAVNSKSLQPAIAEYIVQKAKQRIALQRWQDYLNRRKNHKGMIFVENTVDLEGPPLDFYYINEYRPAPGISINSEATFGCSCTDCFFDKCCPAEAGVVLAYNKKQQIKIQPGTPIYECNSRCRCGPECPNRIVQKGTQYSLCIFKTSNGCGWGVKTLVKIKRMSFVMEYVGEVITSEEAERRGQFYDNKGITYLFDLDYESDEFTVDAARYGNVSHFVNHSCDPNLQVFSVFIDNLDTRLPRIALFSTRTINAGEELTFDYQMKGSGEASSDSIDHSPAKKRVRTQCKCGAETCRGYLN.

The disordered stretch occupies residues M1–R59. A compositionally biased stretch (basic residues) spans P27–R37. The Chromo domain occupies Y118 to R176. The Pre-SET domain occupies F256–G314. Residues C258, C260, C263, C268, C269, C296, C300, C302, and C306 each contribute to the Zn(2+) site. Residues Y317–Q440 form the SET domain. S-adenosyl-L-methionine is bound by residues C328–W330, Y371, and N397–H398. Residue C400 participates in Zn(2+) binding. Phosphoserine occurs at positions 448, 451, and 455. The region spanning V461–N477 is the Post-SET domain. Zn(2+)-binding residues include C465, C467, and C472.

The protein belongs to the class V-like SAM-binding methyltransferase superfamily. Histone-lysine methyltransferase family. Suvar3-9 subfamily. Interacts with SMAD5. The large PER complex involved in the histone methylation is composed of at least PER2, CBX3, TRIM28, SUV39H1 and/or SUV39H2; CBX3 mediates the formation of the complex. Ubiquitinated by the DCX(DCAF13) E3 ubiquitin ligase complex, leading to its degradation. In terms of tissue distribution, testis specific; predominant expression in type B spermatogonia and preleptotene spermatocytes.

It localises to the nucleus. Its subcellular location is the chromosome. The protein resides in the centromere. The enzyme catalyses L-lysyl(9)-[histone H3] + 3 S-adenosyl-L-methionine = N(6),N(6),N(6)-trimethyl-L-lysyl(9)-[histone H3] + 3 S-adenosyl-L-homocysteine + 3 H(+). Histone methyltransferase that specifically trimethylates 'Lys-9' of histone H3 using monomethylated H3 'Lys-9' as substrate. H3 'Lys-9' trimethylation represents a specific tag for epigenetic transcriptional repression by recruiting HP1 (CBX1, CBX3 and/or CBX5) proteins to methylated histones. Mainly functions in heterochromatin regions, thereby playing a central role in the establishment of constitutive heterochromatin at pericentric and telomere regions. H3 'Lys-9' trimethylation is also required to direct DNA methylation at pericentric repeats. SUV39H1 is targeted to histone H3 via its interaction with RB1 and is involved in many processes, such as cell cycle regulation, transcriptional repression and regulation of telomere length. May participate in regulation of higher-order chromatin organization during spermatogenesis. Recruited by the large PER complex to the E-box elements of the circadian target genes such as PER2 itself or PER1, contributes to the conversion of local chromatin to a heterochromatin-like repressive state through H3 'Lys-9' trimethylation. This is Histone-lysine N-methyltransferase SUV39H2 (Suv39h2) from Mus musculus (Mouse).